A 67-amino-acid chain; its full sequence is Large ribosomal subunit protein uL29 (67 aa).

This sequence belongs to the universal ribosomal protein uL29 family.

This is Large ribosomal subunit protein uL29 from Gemmatimonas aurantiaca (strain DSM 14586 / JCM 11422 / NBRC 100505 / T-27).